Consider the following 265-residue polypeptide: Putative cysteine-rich receptor-like protein kinase 9 (265 aa).

The N-terminal stretch at M1 to A23 is a signal peptide. Gnk2-homologous domains follow at residues F27–I131 and F142–F244. Residues N35, N60, N69, N153, N177, and N246 are each glycosylated (N-linked (GlcNAc...) asparagine).

This sequence belongs to the protein kinase superfamily. Ser/Thr protein kinase family. CRK subfamily.

Its subcellular location is the secreted. This chain is Putative cysteine-rich receptor-like protein kinase 9 (CRK9), found in Arabidopsis thaliana (Mouse-ear cress).